Consider the following 360-residue polypeptide: Cyclin-Y-like protein 2 (360 aa).

The 83-residue stretch at Arg204 to Gly286 folds into the Cyclin N-terminal domain.

Belongs to the cyclin family. Cyclin Y subfamily.

The polypeptide is Cyclin-Y-like protein 2 (CCNYL2) (Macaca fascicularis (Crab-eating macaque)).